The following is a 65-amino-acid chain: Large ribosomal subunit protein bL35 (65 aa).

Positions Met1 to Lys26 are disordered.

It belongs to the bacterial ribosomal protein bL35 family.

This chain is Large ribosomal subunit protein bL35, found in Clostridium novyi (strain NT).